The primary structure comprises 336 residues: Anthranilate phosphoribosyltransferase (336 aa).

5-phospho-alpha-D-ribose 1-diphosphate is bound by residues G79, 82-83 (GD), T87, 89-92 (NISS), 107-115 (KHGNRSVSS), and S119. Position 79 (G79) interacts with anthranilate. Residue S91 coordinates Mg(2+). N110 lines the anthranilate pocket. Position 165 (R165) interacts with anthranilate. Positions 223 and 224 each coordinate Mg(2+).

Belongs to the anthranilate phosphoribosyltransferase family. In terms of assembly, homodimer. Mg(2+) is required as a cofactor.

It catalyses the reaction N-(5-phospho-beta-D-ribosyl)anthranilate + diphosphate = 5-phospho-alpha-D-ribose 1-diphosphate + anthranilate. Its pathway is amino-acid biosynthesis; L-tryptophan biosynthesis; L-tryptophan from chorismate: step 2/5. Its function is as follows. Catalyzes the transfer of the phosphoribosyl group of 5-phosphorylribose-1-pyrophosphate (PRPP) to anthranilate to yield N-(5'-phosphoribosyl)-anthranilate (PRA). This is Anthranilate phosphoribosyltransferase from Tolumonas auensis (strain DSM 9187 / NBRC 110442 / TA 4).